The primary structure comprises 498 residues: Glycerol kinase (498 aa).

Position 12 (threonine 12) interacts with ADP. Residues threonine 12, threonine 13, and serine 14 each contribute to the ATP site. Threonine 12 provides a ligand contact to sn-glycerol 3-phosphate. Arginine 16 serves as a coordination point for ADP. Sn-glycerol 3-phosphate-binding residues include arginine 82, glutamate 83, tyrosine 134, and aspartate 243. The glycerol site is built by arginine 82, glutamate 83, tyrosine 134, aspartate 243, and glutamine 244. ADP-binding residues include threonine 265 and glycine 308. Positions 265, 308, 312, and 409 each coordinate ATP. Positions 409 and 413 each coordinate ADP.

Belongs to the FGGY kinase family. In terms of assembly, homotetramer and homodimer (in equilibrium).

The catalysed reaction is glycerol + ATP = sn-glycerol 3-phosphate + ADP + H(+). It functions in the pathway polyol metabolism; glycerol degradation via glycerol kinase pathway; sn-glycerol 3-phosphate from glycerol: step 1/1. With respect to regulation, activated by phosphorylation and inhibited by fructose 1,6-bisphosphate (FBP). Key enzyme in the regulation of glycerol uptake and metabolism. Catalyzes the phosphorylation of glycerol to yield sn-glycerol 3-phosphate. This is Glycerol kinase from Clostridium botulinum (strain ATCC 19397 / Type A).